A 262-amino-acid polypeptide reads, in one-letter code: MDPRLSTVRQTCCCFNVRIATTALAIYHVIMSVLLFIEHSVEVAHGKASCKLSQMGYLRIADLISSFLLITMLFIISLSLLIGVVKNREKYLLPFLSLQIMDYLLCLLTLLGSYIELPAYLKLASRSRASSSKFPLMTLQLLDFCLSILTLCSSYMEVPTYLNFKSMNHMNYLPSQEDMPHNQFIKMMIIFSIAFITVLIFKVYMFKCVWRCYRLIKCMNSVEEKRNSKMLQKVVLPSYEEALSLPSKTPEGGPAPPPYSEV.

5 helical membrane-spanning segments follow: residues 19-39 (IATT…FIEH), 64-84 (ISSF…LIGV), 92-112 (LLPF…TLLG), 134-154 (FPLM…LCSS), and 184-204 (FIKM…FKVY). Tyrosine 259 carries the post-translational modification Phosphotyrosine.

The protein belongs to the LAPTM4/LAPTM5 transporter family. In terms of assembly, binds to ubiquitin. In terms of tissue distribution, preferentially expressed in adult hematopoietic tissues. High levels in lymphoid and myeloid tissues. Highly expressed in peripheral blood leukocytes, thymus, spleen and lung, followed by placenta, liver and kidney.

The protein localises to the lysosome membrane. In terms of biological role, may have a special functional role during embryogenesis and in adult hematopoietic cells. This is Lysosomal-associated transmembrane protein 5 (LAPTM5) from Homo sapiens (Human).